Here is a 398-residue protein sequence, read N- to C-terminus: Serine/threonine-protein phosphatase 4 regulatory subunit 2-B (398 aa).

The disordered stretch occupies residues 138–398 (SSEKNTSPSL…NAPEEPMEQD (261 aa)). 3 stretches are compositionally biased toward polar residues: residues 139–149 (SEKNTSPSLNR), 156–170 (PSNS…NVNG), and 183–193 (TLSSPMNTNGL). Over residues 197 to 211 (MENKESDLQQKEKSL) the composition is skewed to basic and acidic residues. Polar residues predominate over residues 278 to 294 (ASTSADKGKESCQTAQT). Over residues 338-366 (SESACSLNSEEPNSAAAAASTAGTDSSEG) the composition is skewed to low complexity.

The protein belongs to the PPP4R2 family. Serine/threonine-protein phosphatase 4 (PP4) occurs in different assemblies of the catalytic and one or more regulatory subunits.

Regulatory subunit of serine/threonine-protein phosphatase 4 (PP4). In Xenopus laevis (African clawed frog), this protein is Serine/threonine-protein phosphatase 4 regulatory subunit 2-B (ppp4r2-b).